The chain runs to 114 residues: Large ribosomal subunit protein bL19 (114 aa).

This sequence belongs to the bacterial ribosomal protein bL19 family.

Functionally, this protein is located at the 30S-50S ribosomal subunit interface and may play a role in the structure and function of the aminoacyl-tRNA binding site. This is Large ribosomal subunit protein bL19 from Listeria welshimeri serovar 6b (strain ATCC 35897 / DSM 20650 / CCUG 15529 / CIP 8149 / NCTC 11857 / SLCC 5334 / V8).